Consider the following 314-residue polypeptide: D-alanine--D-alanine ligase (314 aa).

The region spanning lysine 114–aspartate 309 is the ATP-grasp domain. Position 140-195 (isoleucine 140–threonine 195) interacts with ATP. Aspartate 263, glutamate 276, and asparagine 278 together coordinate Mg(2+).

Belongs to the D-alanine--D-alanine ligase family. Requires Mg(2+) as cofactor. Mn(2+) serves as cofactor.

The protein localises to the cytoplasm. It carries out the reaction 2 D-alanine + ATP = D-alanyl-D-alanine + ADP + phosphate + H(+). The protein operates within cell wall biogenesis; peptidoglycan biosynthesis. Its function is as follows. Cell wall formation. In Chromohalobacter salexigens (strain ATCC BAA-138 / DSM 3043 / CIP 106854 / NCIMB 13768 / 1H11), this protein is D-alanine--D-alanine ligase.